The chain runs to 145 residues: Ribosome maturation factor RimP (145 aa).

Belongs to the RimP family.

The protein localises to the cytoplasm. In terms of biological role, required for maturation of 30S ribosomal subunits. This chain is Ribosome maturation factor RimP, found in Borreliella burgdorferi (strain ZS7) (Borrelia burgdorferi).